We begin with the raw amino-acid sequence, 751 residues long: Phosphoribosylformylglycinamidine synthase subunit PurL (751 aa).

Histidine 54 is a catalytic residue. 2 residues coordinate ATP: tyrosine 57 and lysine 106. Glutamate 108 is a Mg(2+) binding site. Substrate-binding positions include 109 to 112 and arginine 131; that span reads SHNH. Histidine 110 serves as the catalytic Proton acceptor. Aspartate 132 is a binding site for Mg(2+). Glutamine 256 lines the substrate pocket. Position 284 (aspartate 284) interacts with Mg(2+). 328–330 provides a ligand contact to substrate; it reads ESQ. Positions 516 and 553 each coordinate ATP. Asparagine 554 is a binding site for Mg(2+). Serine 556 serves as a coordination point for substrate.

This sequence belongs to the FGAMS family. As to quaternary structure, monomer. Part of the FGAM synthase complex composed of 1 PurL, 1 PurQ and 2 PurS subunits.

The protein resides in the cytoplasm. It carries out the reaction N(2)-formyl-N(1)-(5-phospho-beta-D-ribosyl)glycinamide + L-glutamine + ATP + H2O = 2-formamido-N(1)-(5-O-phospho-beta-D-ribosyl)acetamidine + L-glutamate + ADP + phosphate + H(+). It functions in the pathway purine metabolism; IMP biosynthesis via de novo pathway; 5-amino-1-(5-phospho-D-ribosyl)imidazole from N(2)-formyl-N(1)-(5-phospho-D-ribosyl)glycinamide: step 1/2. Its function is as follows. Part of the phosphoribosylformylglycinamidine synthase complex involved in the purines biosynthetic pathway. Catalyzes the ATP-dependent conversion of formylglycinamide ribonucleotide (FGAR) and glutamine to yield formylglycinamidine ribonucleotide (FGAM) and glutamate. The FGAM synthase complex is composed of three subunits. PurQ produces an ammonia molecule by converting glutamine to glutamate. PurL transfers the ammonia molecule to FGAR to form FGAM in an ATP-dependent manner. PurS interacts with PurQ and PurL and is thought to assist in the transfer of the ammonia molecule from PurQ to PurL. This is Phosphoribosylformylglycinamidine synthase subunit PurL from Nocardioides sp. (strain ATCC BAA-499 / JS614).